The chain runs to 209 residues: NADH-ubiquinone oxidoreductase subunit 9 (209 aa).

It belongs to the complex I 30 kDa subunit family. In terms of assembly, complex I is composed of about 30 different subunits.

The protein localises to the mitochondrion inner membrane. The catalysed reaction is a ubiquinone + NADH + 5 H(+)(in) = a ubiquinol + NAD(+) + 4 H(+)(out). Functionally, core subunit of the mitochondrial membrane respiratory chain NADH dehydrogenase (Complex I) that is believed to belong to the minimal assembly required for catalysis. Complex I functions in the transfer of electrons from NADH to the respiratory chain. The immediate electron acceptor for the enzyme is believed to be ubiquinone. This is NADH-ubiquinone oxidoreductase subunit 9 (NAD9) from Paramecium primaurelia.